Consider the following 567-residue polypeptide: Proline--tRNA ligase (567 aa).

The protein belongs to the class-II aminoacyl-tRNA synthetase family. ProS type 1 subfamily. In terms of assembly, homodimer.

Its subcellular location is the cytoplasm. The catalysed reaction is tRNA(Pro) + L-proline + ATP = L-prolyl-tRNA(Pro) + AMP + diphosphate. Its function is as follows. Catalyzes the attachment of proline to tRNA(Pro) in a two-step reaction: proline is first activated by ATP to form Pro-AMP and then transferred to the acceptor end of tRNA(Pro). As ProRS can inadvertently accommodate and process non-cognate amino acids such as alanine and cysteine, to avoid such errors it has two additional distinct editing activities against alanine. One activity is designated as 'pretransfer' editing and involves the tRNA(Pro)-independent hydrolysis of activated Ala-AMP. The other activity is designated 'posttransfer' editing and involves deacylation of mischarged Ala-tRNA(Pro). The misacylated Cys-tRNA(Pro) is not edited by ProRS. In Geobacillus kaustophilus (strain HTA426), this protein is Proline--tRNA ligase.